The chain runs to 522 residues: Glutamate--cysteine ligase, chloroplastic (522 aa).

2 disulfides stabilise this stretch: C186/C406 and C349/C364.

Belongs to the carboxylate-amine ligase family. Glutamate--cysteine ligase type 2 subfamily. In terms of assembly, homodimer or monomer when oxidized or reduced, respectively. Post-translationally, the Cys-186-Cys-406 disulfide bridge is known to modulate the enzyme activity according to the redox status. The oxidized form constitutes the active enzyme. Abundant in leaves and roots. Expressed to a high level in leaf trichomes of mature plant.

Its subcellular location is the plastid. The protein resides in the chloroplast. It carries out the reaction L-cysteine + L-glutamate + ATP = gamma-L-glutamyl-L-cysteine + ADP + phosphate + H(+). It participates in sulfur metabolism; glutathione biosynthesis; glutathione from L-cysteine and L-glutamate: step 1/2. Feedback inhibition by glutathione. Inhibited by buthionine sulfoximine and cystamine. Functionally, seems to play an important role in controlling the expression of resistance responses like the regulation of salicylic acid (SA) and phytoalexin (camalexin) production. Involved in resistance to fungal and bacterial pathogens. Required for the regulation of cell proliferation in root apical meristems through the GSH-dependent developmental pathway. Also participates in the detoxification process, the antioxidant response and is essential for embryo development and proper seed maturation. The sequence is that of Glutamate--cysteine ligase, chloroplastic (GSH1) from Arabidopsis thaliana (Mouse-ear cress).